The following is a 335-amino-acid chain: Nonaprenyl diphosphate synthase (335 aa).

Positions 57, 60, and 90 each coordinate isopentenyl diphosphate. Mg(2+)-binding residues include D97 and D101. The short motif at 97-101 (DDVMD) is the DDXXD motif element. R107 provides a ligand contact to isopentenyl diphosphate. The short motif at 223 to 227 (DDIID) is the DDXXD motif element.

Belongs to the FPP/GGPP synthase family. Requires Mg(2+) as cofactor.

The catalysed reaction is isopentenyl diphosphate + (2E)-geranyl diphosphate = (2E,6E)-farnesyl diphosphate + diphosphate. The enzyme catalyses isopentenyl diphosphate + (2E,6E)-farnesyl diphosphate = (2E,6E,10E)-geranylgeranyl diphosphate + diphosphate. It carries out the reaction 5 isopentenyl diphosphate + (2E,6E,10E)-geranylgeranyl diphosphate = all-trans-nonaprenyl diphosphate + 5 diphosphate. It participates in isoprenoid biosynthesis; farnesyl diphosphate biosynthesis; farnesyl diphosphate from geranyl diphosphate and isopentenyl diphosphate. It functions in the pathway isoprenoid biosynthesis; geranylgeranyl diphosphate biosynthesis; geranylgeranyl diphosphate from farnesyl diphosphate and isopentenyl diphosphate: step 1/1. Catalyzes the sequential condensations of isopentenyl pyrophosphate (IPP) with geranyl diphosphate (GPP) to yield (2E,6E)-farnesyl diphosphate (E,E-FPP), with E,E-FPP to yield geranylgeranyl diphosphate (GGPP) and with GGPP to yield nonaprenyl diphosphate. May also have weak activity with dimethylallyl diphosphate (DMAPP). This Mycobacterium tuberculosis (strain ATCC 25618 / H37Rv) protein is Nonaprenyl diphosphate synthase.